Reading from the N-terminus, the 396-residue chain is MILVVNAGSSSIKFRLFNDLDKSNPIDILDGLAERITVDGAVSFKYEGKKYEYNVELPNHEVAIKFILDKLIELNIISNVDDINAVGFRVVHGGTISKSSIIDQKVFDTIKDAVKLAPLHNPGAITAIEAIEKVMPKAKLVACFDTAYHQTLAEEQYLYAVPYSWYKEHGVRKYGFHGISYQYIAEKMSEVLAKPKDQLNLIVCHLGNGASITCIKNGKSFDTTMGLTPLAGVMMGTRSGDIDPSIIEYMCKELQLDVSKITNILNKESGLLGLSGKSSDMRDVTGGYFKGDEDYKRALNKYTQVSADYIIRFANLLGHNIDGIVFTAGVGENSIHTRQFILEKLPLLDIEIDNAKNEESYGDYKYISSPNSKIKVLAVRTNEELMICKDTINLTK.

N6 contacts Mg(2+). ATP is bound at residue K13. Substrate is bound at residue R89. D145 functions as the Proton donor/acceptor in the catalytic mechanism. ATP-binding positions include H205–G209, D280–R282, and G329–N333. E383 is a binding site for Mg(2+).

The protein belongs to the acetokinase family. Homodimer. It depends on Mg(2+) as a cofactor. Mn(2+) is required as a cofactor.

Its subcellular location is the cytoplasm. The catalysed reaction is acetate + ATP = acetyl phosphate + ADP. The protein operates within metabolic intermediate biosynthesis; acetyl-CoA biosynthesis; acetyl-CoA from acetate: step 1/2. Functionally, catalyzes the formation of acetyl phosphate from acetate and ATP. Can also catalyze the reverse reaction. The sequence is that of Acetate kinase from Mesoplasma florum (strain ATCC 33453 / NBRC 100688 / NCTC 11704 / L1) (Acholeplasma florum).